A 157-amino-acid chain; its full sequence is Ribonuclease H (157 aa).

An RNase H type-1 domain is found at 4–146 (KRTEITIYTD…CDKLAVKASQ (143 aa)). Positions 13, 51, 73, and 138 each coordinate Mg(2+).

The protein belongs to the RNase H family. Monomer. The cofactor is Mg(2+).

It is found in the cytoplasm. It catalyses the reaction Endonucleolytic cleavage to 5'-phosphomonoester.. Endonuclease that specifically degrades the RNA of RNA-DNA hybrids. This chain is Ribonuclease H, found in Trichodesmium erythraeum (strain IMS101).